The primary structure comprises 785 residues: MTDLEVSAIQVIDENKVFNSLLVDYMKQFYSQNNSSDDKGLNYHIVSVFGSQSTGKSTLLNHLFHTKFDVMDESQRQQTTKGIWLAHANHISSSNESGDFANNTKNVFVMDVEGTDGRERGEDQDFERKAALFALSTSEILIINIWEHQVGLYQGANLGLLRTVFEVNLSLFAKNKQRCLLLFVIRDHVGNTSLESLSDVLTLDLQNIWSQLNKPQGTEGFELDDFFDLKFVALAHKLLQPDKFIEDISVLGDKFISEDQLFNEGYHRAIPIDGWSMYAEQVWEQIETNQDLDLPTQQILVARFRCDEISSQVYESFHEQFVKSNWDDLSFTEIGNSLKELRQNAVQQYDILAGRYSESVYLQRKKLLVQKVDLSILEVYTSVLQKLIRQSRDLYLKQIESSLTKKEAGIIFYQVLDNAERESLKYFNENTSLISFVDVDDSEARSYDPSPKLRELEEELSNLRTELVNKEQENIKTKIPRKFKSHFKLIVQDELSNIKPSSWEELLDQFRQVSEKLLAKYKSPDSNYDFHLGLSKEKNKELHEQVLIKFWIKFKEILNDFVTETNVLRLLVSKFEDEFRYDEEGLPVVWKNSAEIDVKFAKARNSALDLLPLFSLAHTAEGEILPDYDIAHDEAEAESDNEEDDGFKESHKFAHLLSARDQDAIRNKFKKQTDALYVETKRSVINSKTEVPLYIYALLLVLGWNEFMIILRNPLLITLLLIGLTGLYLGYKTKLLGPIVQVVQAMIQELQDQAKNKLRDVLVSEPEAPSQVRIGKEVDATKDED.

Residues 1 to 690 (MTDLEVSAIQ…KRSVINSKTE (690 aa)) are Cytoplasmic-facing. The region spanning 40-266 (GLNYHIVSVF…SEDQLFNEGY (227 aa)) is the GB1/RHD3-type G domain. 50–57 (GSQSTGKS) contacts GTP. Residues 451–479 (PKLRELEEELSNLRTELVNKEQENIKTKI) adopt a coiled-coil conformation. The chain crosses the membrane as a helical span at residues 691 to 711 (VPLYIYALLLVLGWNEFMIIL). Topologically, residues 712–714 (RNP) are lumenal. The helical transmembrane segment at 715 to 735 (LLITLLLIGLTGLYLGYKTKL) threads the bilayer. The Cytoplasmic portion of the chain corresponds to 736-785 (LGPIVQVVQAMIQELQDQAKNKLRDVLVSEPEAPSQVRIGKEVDATKDED).

It belongs to the TRAFAC class dynamin-like GTPase superfamily. GB1/RHD3 GTPase family. RHD3 subfamily.

The protein resides in the endoplasmic reticulum membrane. Its function is as follows. Cooperates with the reticulon proteins and tubule-shaping DP1 family proteins to generate and maintain the structure of the tubular endoplasmic reticulum network. Has GTPase activity, which is required for its function in ER organization. In Komagataella phaffii (strain GS115 / ATCC 20864) (Yeast), this protein is Protein SEY1.